A 242-amino-acid chain; its full sequence is Probable transcriptional regulatory protein Bxeno_A1185 (242 aa).

This sequence belongs to the TACO1 family.

The protein resides in the cytoplasm. In Paraburkholderia xenovorans (strain LB400), this protein is Probable transcriptional regulatory protein Bxeno_A1185.